A 333-amino-acid chain; its full sequence is Protein FAM170A (333 aa).

Disordered regions lie at residues 1-45, 73-107, and 143-214; these read MKRR…GVGE, LQDSSKPRSPLDQVPEGEATTAPSQQASSSCPSYK, and ETSE…AKTP. Basic and acidic residues predominate over residues 10-29; it reads LEIEESKEAGISKSQEDISH. Positions 92–105 are enriched in low complexity; sequence TTAPSQQASSSCPS. Basic and acidic residues predominate over residues 143-156; it reads ETSESLEKQPRMEE. The segment covering 170–179 has biased composition (polar residues); that stretch reads SDVSTRNLLS. Residues 185 to 196 are compositionally biased toward basic and acidic residues; sequence GEEKEHEEKPES. Thr-213 carries the post-translational modification Phosphothreonine. The segment at 224 to 248 adopts a C2H2-type; degenerate zinc-finger fold; it reads FRCMACCRVFATMESLQEHVQYGIR. The interval 267-333 is disordered; sequence MESESTQEEE…RKDHCDNSGS (67 aa). The span at 271–281 shows a compositional bias: acidic residues; sequence STQEEEEDHTE. Basic and acidic residues predominate over residues 282 to 293; that stretch reads ETEKPKEEKAEE. Residue Ser-308 is modified to Phosphoserine.

The protein belongs to the FAM170 family. Testis-specific.

Its subcellular location is the nucleus. Functionally, acts as a nuclear transcription factor that positively regulates the expression of heat shock genes. Binds to heat shock promoter elements (HSE). The polypeptide is Protein FAM170A (Fam170a) (Mus musculus (Mouse)).